A 156-amino-acid polypeptide reads, in one-letter code: Small ribosomal subunit protein uS7 (156 aa).

This sequence belongs to the universal ribosomal protein uS7 family. As to quaternary structure, part of the 30S ribosomal subunit. Contacts proteins S9 and S11.

Functionally, one of the primary rRNA binding proteins, it binds directly to 16S rRNA where it nucleates assembly of the head domain of the 30S subunit. Is located at the subunit interface close to the decoding center, probably blocks exit of the E-site tRNA. This chain is Small ribosomal subunit protein uS7, found in Roseobacter denitrificans (strain ATCC 33942 / OCh 114) (Erythrobacter sp. (strain OCh 114)).